We begin with the raw amino-acid sequence, 227 residues long: Cytochrome c oxidase subunit 2 (227 aa).

The Mitochondrial intermembrane segment spans residues 1–14 (MAYPMQLGFQDATS). Residues 15–45 (PIMEELLHFHDHTLMIVFLISSLVLYVISLM) traverse the membrane as a helical segment. Over 46-59 (LTTKLTHTSTMDAQ) the chain is Mitochondrial matrix. A helical membrane pass occupies residues 60-87 (EVETIWTILPAIILILIALPSLRILYMM). Residues 88–227 (DEINNPSLTV…YFEKWSASML (140 aa)) lie on the Mitochondrial intermembrane side of the membrane. Cu cation is bound by residues His-161, Cys-196, Glu-198, Cys-200, His-204, and Met-207. Glu-198 contributes to the Mg(2+) binding site.

This sequence belongs to the cytochrome c oxidase subunit 2 family. In terms of assembly, component of the cytochrome c oxidase (complex IV, CIV), a multisubunit enzyme composed of 14 subunits. The complex is composed of a catalytic core of 3 subunits MT-CO1, MT-CO2 and MT-CO3, encoded in the mitochondrial DNA, and 11 supernumerary subunits COX4I, COX5A, COX5B, COX6A, COX6B, COX6C, COX7A, COX7B, COX7C, COX8 and NDUFA4, which are encoded in the nuclear genome. The complex exists as a monomer or a dimer and forms supercomplexes (SCs) in the inner mitochondrial membrane with NADH-ubiquinone oxidoreductase (complex I, CI) and ubiquinol-cytochrome c oxidoreductase (cytochrome b-c1 complex, complex III, CIII), resulting in different assemblies (supercomplex SCI(1)III(2)IV(1) and megacomplex MCI(2)III(2)IV(2)). Found in a complex with TMEM177, COA6, COX18, COX20, SCO1 and SCO2. Interacts with TMEM177 in a COX20-dependent manner. Interacts with COX20. Interacts with COX16. Cu cation serves as cofactor.

The protein resides in the mitochondrion inner membrane. It carries out the reaction 4 Fe(II)-[cytochrome c] + O2 + 8 H(+)(in) = 4 Fe(III)-[cytochrome c] + 2 H2O + 4 H(+)(out). Functionally, component of the cytochrome c oxidase, the last enzyme in the mitochondrial electron transport chain which drives oxidative phosphorylation. The respiratory chain contains 3 multisubunit complexes succinate dehydrogenase (complex II, CII), ubiquinol-cytochrome c oxidoreductase (cytochrome b-c1 complex, complex III, CIII) and cytochrome c oxidase (complex IV, CIV), that cooperate to transfer electrons derived from NADH and succinate to molecular oxygen, creating an electrochemical gradient over the inner membrane that drives transmembrane transport and the ATP synthase. Cytochrome c oxidase is the component of the respiratory chain that catalyzes the reduction of oxygen to water. Electrons originating from reduced cytochrome c in the intermembrane space (IMS) are transferred via the dinuclear copper A center (CU(A)) of subunit 2 and heme A of subunit 1 to the active site in subunit 1, a binuclear center (BNC) formed by heme A3 and copper B (CU(B)). The BNC reduces molecular oxygen to 2 water molecules using 4 electrons from cytochrome c in the IMS and 4 protons from the mitochondrial matrix. This Gazella spekei (Speke's gazelle) protein is Cytochrome c oxidase subunit 2 (MT-CO2).